The primary structure comprises 351 residues: Protein RecA (351 aa).

73-80 lines the ATP pocket; that stretch reads GPESSGKT.

The protein belongs to the RecA family.

It is found in the cytoplasm. Can catalyze the hydrolysis of ATP in the presence of single-stranded DNA, the ATP-dependent uptake of single-stranded DNA by duplex DNA, and the ATP-dependent hybridization of homologous single-stranded DNAs. It interacts with LexA causing its activation and leading to its autocatalytic cleavage. The sequence is that of Protein RecA from Oleidesulfovibrio alaskensis (strain ATCC BAA-1058 / DSM 17464 / G20) (Desulfovibrio alaskensis).